The primary structure comprises 559 residues: MGKKNKSKINPIEELKSDCLPILELQYSDPLFQIASHPEQAIIISGLATGYVYCHRYNVTVLENYLQQQKKKFVSDADGKKSKKVKFWTVYDIINENKDNADTGSDSGVELIWKTKRHKGSVRCIALDSDGQFVYTVGTDNVLKKADVLTGKVVKKTNLKNDNGGKYTKMVKSPTHSLLILGDENGTVIVLNSETLQETNRLTKVHNGDDAINDIFHFAKRSIYRYISLGQTTLAYWDARESNESDFKLDPEDTTSKRKVMLSDDQEDEVLCGTFVDPEVGDNLVCGMGDGILTVWKPERNDLEDQLNRIKIAKEESIDCIVPTLQDDNCIWCGCSNGNIYKADIKKGKVVEVRNHSSLDEVSFLDLDYDYRVISGGMDKVKIWQSRNEVSEEEDDEESESFSDSDSDSDSDSDSDSDSDRDRDRDSDSDGDSDGDDIGNGSDVNDSGASGSENDSSDVWEGLENGSDDEPVQEKDETSGSDMDDIDEGSDSSEGELIGLSREELIAELDEDIMEESEQEGEKLQKKRKNEPSKKNTKNLKKVKPSYNDSHGIRKFEGL.

9 WD repeats span residues 26-67 (QYSD…NYLQ), 77-116 (ADGK…WKTK), 117-156 (RHKG…VVKK), 162-201 (DNGG…ETNR), 207-247 (NGDD…ESDF), 265-306 (DQED…LEDQ), 313-347 (AKEE…DIKK), 354-394 (RNHS…SEEE), and 428-470 (DSDG…SDDE). Disordered stretches follow at residues 386 to 500 (SRNE…LIGL) and 515 to 559 (EESE…FEGL). Residues 391 to 417 (SEEEDDEESESFSDSDSDSDSDSDSDS) show a composition bias toward acidic residues. The segment covering 418 to 428 (DSDRDRDRDSD) has biased composition (basic and acidic residues). The segment covering 482-494 (DMDDIDEGSDSSE) has biased composition (acidic residues). Basic and acidic residues predominate over residues 520–534 (EGEKLQKKRKNEPSK). The segment covering 535–544 (KNTKNLKKVK) has biased composition (basic residues).

The protein belongs to the WD repeat WDR55 family.

It localises to the nucleus. Its subcellular location is the nucleolus. This Vanderwaltozyma polyspora (strain ATCC 22028 / DSM 70294 / BCRC 21397 / CBS 2163 / NBRC 10782 / NRRL Y-8283 / UCD 57-17) (Kluyveromyces polysporus) protein is WD repeat-containing protein JIP5 (JIP5).